Consider the following 551-residue polypeptide: Podocalyxin (551 aa).

Residues 1–21 (MRSALALAALLLLLLSPPSLS) form the signal peptide. A disordered region spans residues 18–324 (PSLSQEKSPQ…QRVSCGPPER (307 aa)). The Extracellular portion of the chain corresponds to 22–452 (QEKSPQPGPT…PPEETEDRFS (431 aa)). The span at 32-59 (PMATSTSTRPAPASAPAPKSSVAASVPA) shows a compositional bias: low complexity. A compositionally biased stretch (polar residues) spans 60–90 (EQNTTPMTTKAPATQSPSASPGSSVENSAPA). Residues 91-104 (QGSTTTQQSLSVTT) show a composition bias toward low complexity. The span at 142–164 (APSNHSITTKPLATEATSQAPRQ) shows a compositional bias: polar residues. Asn145 and Asn180 each carry an N-linked (GlcNAc...) asparagine glycan. The span at 234 to 244 (PVASSAETQGM) shows a compositional bias: polar residues. The segment covering 289-300 (TSSSTELASTAL) has biased composition (low complexity). Asn333 is a glycosylation site (N-linked (GlcNAc...) asparagine). Residues 453–473 (LPLIITIVCMASFLLLVAALY) traverse the membrane as a helical segment. Residues 474 to 551 (GCCHQRLSHR…DLDEEEDTHL (78 aa)) lie on the Cytoplasmic side of the membrane. Thr511 bears the Phosphothreonine mark. Phosphoserine is present on Ser530. Position 549 is a phosphothreonine (Thr549).

The protein belongs to the podocalyxin family. In terms of assembly, monomer; when associated with the membrane raft. Oligomer; when integrated in the apical membrane. Found in a complex with EZR, PODXL and NHERF2. Associates with the actin cytoskeleton through complex formation with EZR and NHERF2. Interacts (via the C-terminal PDZ-binding motif DTHL) with NHERF1 (via the PDZ domains); interaction is not detected in glomerular epithelium cells, take place early in the secretory pathway and is necessary for its apical membrane sorting. Interacts (via the C-terminal PDZ-binding motif DTHL) with NHERF2 (via the PDZ 1 domain); interaction is detected in glomerular epithelium cells. Interacts with EZR. N- and O-linked glycosylated. Sialoglycoprotein. In terms of tissue distribution, glomerular epithelium cell (podocyte) and endothelial cells.

It is found in the apical cell membrane. Its subcellular location is the cell projection. The protein resides in the microvillus. The protein localises to the membrane raft. It localises to the lamellipodium. It is found in the filopodium. Its subcellular location is the ruffle. The protein resides in the membrane. Involved in the regulation of both adhesion and cell morphology and cancer progression. Functions as an anti-adhesive molecule that maintains an open filtration pathway between neighboring foot processes in the podocyte by charge repulsion. Acts as a pro-adhesive molecule, enhancing the adherence of cells to immobilized ligands, increasing the rate of migration and cell-cell contacts in an integrin-dependent manner. Induces the formation of apical actin-dependent microvilli. Involved in the formation of a preapical plasma membrane subdomain to set up initial epithelial polarization and the apical lumen formation during renal tubulogenesis. Plays a role in cancer development and aggressiveness by inducing cell migration and invasion through its interaction with the actin-binding protein EZR. Affects EZR-dependent signaling events, leading to increased activities of the MAPK and PI3K pathways in cancer cells. This chain is Podocalyxin (PODXL), found in Oryctolagus cuniculus (Rabbit).